The sequence spans 59 residues: Large ribosomal subunit protein uL30 (59 aa).

This sequence belongs to the universal ribosomal protein uL30 family. Part of the 50S ribosomal subunit.

This chain is Large ribosomal subunit protein uL30, found in Clostridium kluyveri (strain ATCC 8527 / DSM 555 / NBRC 12016 / NCIMB 10680 / K1).